The chain runs to 421 residues: Gamma-glutamyl phosphate reductase (421 aa).

It belongs to the gamma-glutamyl phosphate reductase family.

It is found in the cytoplasm. The enzyme catalyses L-glutamate 5-semialdehyde + phosphate + NADP(+) = L-glutamyl 5-phosphate + NADPH + H(+). The protein operates within amino-acid biosynthesis; L-proline biosynthesis; L-glutamate 5-semialdehyde from L-glutamate: step 2/2. In terms of biological role, catalyzes the NADPH-dependent reduction of L-glutamate 5-phosphate into L-glutamate 5-semialdehyde and phosphate. The product spontaneously undergoes cyclization to form 1-pyrroline-5-carboxylate. The protein is Gamma-glutamyl phosphate reductase of Roseobacter denitrificans (strain ATCC 33942 / OCh 114) (Erythrobacter sp. (strain OCh 114)).